Here is a 363-residue protein sequence, read N- to C-terminus: Protein-glutamate methylesterase/protein-glutamine glutaminase of group 3 operon (363 aa).

The Response regulatory domain maps to 7–124 (RVLIVDDSAS…RQALMESSGR (118 aa)). D58 bears the 4-aspartylphosphate mark. The region spanning 166–357 (PTTERIVCIG…REIMAWQQAK (192 aa)) is the CheB-type methylesterase domain. Residues S177, H203, and D299 contribute to the active site.

The protein belongs to the CheB family. Phosphorylated by CheA. Phosphorylation of the N-terminal regulatory domain activates the methylesterase activity.

The protein resides in the cytoplasm. The catalysed reaction is [protein]-L-glutamate 5-O-methyl ester + H2O = L-glutamyl-[protein] + methanol + H(+). The enzyme catalyses L-glutaminyl-[protein] + H2O = L-glutamyl-[protein] + NH4(+). In terms of biological role, involved in chemotaxis. Part of a chemotaxis signal transduction system that modulates chemotaxis in response to various stimuli. Catalyzes the demethylation of specific methylglutamate residues introduced into the chemoreceptors (methyl-accepting chemotaxis proteins or MCP) by CheR. Also mediates the irreversible deamidation of specific glutamine residues to glutamic acid. The chain is Protein-glutamate methylesterase/protein-glutamine glutaminase of group 3 operon from Rhodopseudomonas palustris (strain ATCC BAA-98 / CGA009).